The primary structure comprises 137 residues: MPTINQLVRKPRKSKVEKSDSPALNIGYNSHKKVHTKLAAPQKRGVATRVGTMTPKKPNSALRKFARVRLSNLIEVTAYIPGIGHNLQEHSVVLIRGGRVKDLPGVRYHIVRGALDTAGVTDRKQGRSKYGTKKPKA.

2 disordered regions span residues 1 to 21 (MPTI…KSDS) and 34 to 57 (VHTK…TPKK).

The protein belongs to the universal ribosomal protein uS12 family. As to quaternary structure, part of the 30S ribosomal subunit. Contacts proteins S8 and S17. May interact with IF1 in the 30S initiation complex.

Its function is as follows. With S4 and S5 plays an important role in translational accuracy. Interacts with and stabilizes bases of the 16S rRNA that are involved in tRNA selection in the A site and with the mRNA backbone. Located at the interface of the 30S and 50S subunits, it traverses the body of the 30S subunit contacting proteins on the other side and probably holding the rRNA structure together. The combined cluster of proteins S8, S12 and S17 appears to hold together the shoulder and platform of the 30S subunit. The sequence is that of Small ribosomal subunit protein uS12 from Streptococcus mutans serotype c (strain ATCC 700610 / UA159).